The following is a 303-amino-acid chain: uncharacterized protein (303 aa).

Residues 15-74 (ERIDKFLASTENDWSRTQVQQWVKDGQVVVNGSAVKANYKIQPGDQVTVTVPEPEALDVL) enclose the S4 RNA-binding domain. Asp-138 is a catalytic residue.

This sequence belongs to the pseudouridine synthase RluA family.

The catalysed reaction is a uridine in RNA = a pseudouridine in RNA. This is an uncharacterized protein from Bacillus subtilis (strain 168).